A 108-amino-acid chain; its full sequence is Small ribosomal subunit protein bS16 (108 aa).

It belongs to the bacterial ribosomal protein bS16 family.

This Orientia tsutsugamushi (strain Boryong) (Rickettsia tsutsugamushi) protein is Small ribosomal subunit protein bS16.